Consider the following 173-residue polypeptide: Large ribosomal subunit protein uL10 (173 aa).

The protein belongs to the universal ribosomal protein uL10 family. Part of the ribosomal stalk of the 50S ribosomal subunit. The N-terminus interacts with L11 and the large rRNA to form the base of the stalk. The C-terminus forms an elongated spine to which L12 dimers bind in a sequential fashion forming a multimeric L10(L12)X complex.

Functionally, forms part of the ribosomal stalk, playing a central role in the interaction of the ribosome with GTP-bound translation factors. This Acidithiobacillus ferrooxidans (strain ATCC 23270 / DSM 14882 / CIP 104768 / NCIMB 8455) (Ferrobacillus ferrooxidans (strain ATCC 23270)) protein is Large ribosomal subunit protein uL10.